A 191-amino-acid polypeptide reads, in one-letter code: Protein GrpE (191 aa).

Belongs to the GrpE family. Homodimer.

The protein localises to the cytoplasm. In terms of biological role, participates actively in the response to hyperosmotic and heat shock by preventing the aggregation of stress-denatured proteins, in association with DnaK and GrpE. It is the nucleotide exchange factor for DnaK and may function as a thermosensor. Unfolded proteins bind initially to DnaJ; upon interaction with the DnaJ-bound protein, DnaK hydrolyzes its bound ATP, resulting in the formation of a stable complex. GrpE releases ADP from DnaK; ATP binding to DnaK triggers the release of the substrate protein, thus completing the reaction cycle. Several rounds of ATP-dependent interactions between DnaJ, DnaK and GrpE are required for fully efficient folding. The polypeptide is Protein GrpE (Nitratidesulfovibrio vulgaris (strain ATCC 29579 / DSM 644 / CCUG 34227 / NCIMB 8303 / VKM B-1760 / Hildenborough) (Desulfovibrio vulgaris)).